A 103-amino-acid chain; its full sequence is Cell division suppressor protein YneA (103 aa).

A LysM domain is found at Val36–Ile87.

Belongs to the YneA family.

It is found in the cytoplasm. Inhibits cell division during the SOS response. Affects a later stage of the cell division protein assembly, after the assembly of the Z ring, by probably suppressing recruitment of FtsL and/or DivIC to the division machinery. The polypeptide is Cell division suppressor protein YneA (Bacillus pumilus (strain SAFR-032)).